Here is a 1188-residue protein sequence, read N- to C-terminus: MESGGVETTRQGKTESLQYAVGPMAYVYARSNLTIDPEEWGLLCAKSSDQPSTAVAPLIPGLTVEEAFNTSIAAIIATKSSGMVGGAASAILSPCHFSPSVYVFYGGERINATSLAPGLTALCDEARTKFGFSSPPPGGPVSNAKETSGETICAALDMDPETTMLYLVVAEPFCEAVYMCNTFLHFGGADSVYINSEFVRRVPIYPVQMYMPDIALRLCRNPFDTNSRNIGEGCAYPKPLYNKSLNRVLHGAVLAPQGQSLRTRDLEAVARAATAVAFDGNFEGCVLAADKTFTQPATPQAKSAAQKPQADVERRAACSLAADLALTTRVSVSCAPYKFEGNASAPYCQWPMFCDAKTPDERAAALSKFMAELAGIVGAGFFAVNSPLYASEVVDGGAAADPGDKHASSNLTRFFFACGLHTLGCPTVDYAGNRVSDGTGDCALASASGFEYGPEHLAYACGFSPELTARALFYLERCSRYQLGADCRGGANTLKFVAAETTMAAECRWCTETTRQYCVRHTLHRLRSRLPTPRAPRRGPMAVFGAVDAEYTDCDQLGNFAPYSHMKRAGEGDSARNVMNDTYRGLCGRVMQFLVSEGLVRADTGEDARNIQSAKDLCDTYDRISNMVDEECAKFIAALSGARGYHYKEHLASSAHTFAVSLNPYSTSFCPMLSHLVTQTKSIILQDLILSQVPSTFDKGQPETKMFRSAAMPTLRSAFMGMLDKGFVSGRQEPVVVSASSVTAPDTSVPSTEKSVAQYEYSLTRGQVLKLKEFKVKNRIVFNGFEGRRGGVRMQGMADSFSRPASVKHINILGGPLGFLLKRYHEMIFGPENNVFQFWNKVIGGTMPMSHLTPEIRKTLNYIRRVSKAYAESNYVKAQPQTILELANFMVTNKILEYCGHGGTNGSFYISTPSAAVMSATRNKDPSAELAWLPAVANPTTKNLTEAAEKSIASEPEKNWVSTSMVTNACRLVMGTKPIIGLGIMVSKYIGQQSSTTVFQAGNWSGFMGASGIQSVNAGLSGDTTRKCMLACKRTGALIKAGPSSSFTESSLAGQVRSMVEAGCTPHAIYAVALRVLGEGLRDVTTDTWVAIVEDRFLIEALEELHAQIAASTPNGWTHEAAMAELNKHGNEEVATDGEMLNFDCDDDDADKDAPHGAKSDVPNGDDEDVFAGPSAKKRTLATEILFC.

The Required for filament formation motif lies at 838–839; that stretch reads FW. Residues 1145 to 1175 form a disordered region; the sequence is CDDDDADKDAPHGAKSDVPNGDDEDVFAGPS. Residues 1166-1188 form a required for nuclear localization region; sequence DDEDVFAGPSAKKRTLATEILFC.

Belongs to the herpesviridae major DNA-binding protein family. As to quaternary structure, homooligomers. Forms double-helical filaments necessary for the formation of replication compartments within the host nucleus. Interacts with the origin-binding protein. Interacts with the helicase primase complex; this interaction stimulates primer synthesis activity of the helicase-primase complex. Interacts with the DNA polymerase. Interacts with the alkaline exonuclease; this interaction increases its nuclease processivity.

The protein localises to the host nucleus. Plays several crucial roles in viral infection. Participates in the opening of the viral DNA origin to initiate replication by interacting with the origin-binding protein. May disrupt loops, hairpins and other secondary structures present on ssDNA to reduce and eliminate pausing of viral DNA polymerase at specific sites during elongation. Promotes viral DNA recombination by performing strand-transfer, characterized by the ability to transfer a DNA strand from a linear duplex to a complementary single-stranded DNA circle. Can also catalyze the renaturation of complementary single strands. Additionally, reorganizes the host cell nucleus, leading to the formation of prereplicative sites and replication compartments. This process is driven by the protein which can form double-helical filaments in the absence of DNA. The polypeptide is Major DNA-binding protein (Amazona oratrix (yellow-headed parrot)).